A 61-amino-acid chain; its full sequence is Large ribosomal subunit protein eL24 (61 aa).

Residues Cys7, Cys10, Cys33, and Cys37 each contribute to the Zn(2+) site. Residues 7 to 37 (CSFCGHEIPPGTGLMYVRNDGTILWFCSSKC) form a C4-type zinc finger.

The protein belongs to the eukaryotic ribosomal protein eL24 family. In terms of assembly, part of the 50S ribosomal subunit. Forms a cluster with proteins L3 and L14. Zn(2+) is required as a cofactor.

Its function is as follows. Binds to the 23S rRNA. This chain is Large ribosomal subunit protein eL24, found in Saccharolobus islandicus (strain Y.N.15.51 / Yellowstone #2) (Sulfolobus islandicus).